Reading from the N-terminus, the 449-residue chain is Hyaluronidase-4 (449 aa).

The N-terminal stretch at 1–23 (MYHIWIKFLAAWIFLKRFNGVHV) is a signal peptide. 2 cysteine pairs are disulfide-bonded: C47–C340 and C211–C227. Residues N67, N103, and N111 are each glycosylated (N-linked (GlcNAc...) asparagine). E135 (proton donor) is an active-site residue. N153 carries an N-linked (GlcNAc...) asparagine glycan. N357 is a glycosylation site (N-linked (GlcNAc...) asparagine). Intrachain disulfides connect C365/C376, C370/C427, and C429/C438. A glycan (N-linked (GlcNAc...) asparagine) is linked at N401. Residues 427–438 (CQCYQGWKGLYC) form the EGF-like domain.

This sequence belongs to the glycosyl hydrolase 56 family. In terms of assembly, monomer. As to expression, expressed by the venom gland.

It localises to the secreted. The catalysed reaction is Random hydrolysis of (1-&gt;4)-linkages between N-acetyl-beta-D-glucosamine and D-glucuronate residues in hyaluronate.. Snake venom endo-hyaluronidase that degrades hyaluronan to smaller oligosaccharide fragments. In venom, it is not toxic by itself, but increases the diffusion of other venom proteins by degrading the extracellular matrix. In addition, it displays antiedematogenic activity. This Cerastes cerastes (Horned desert viper) protein is Hyaluronidase-4.